The sequence spans 425 residues: SWI/SNF and RSC complexes subunit ssr3 (425 aa).

The span at 1-16 shows a compositional bias: polar residues; that stretch reads MSNNSRLPENGVQSGN. A disordered region spans residues 1 to 23; that stretch reads MSNNSRLPENGVQSGNGEDAELK. Residues 201-278 form the SWIB/MDM2 domain; it reads EHPERYKLSK…PELMNRFLEP (78 aa).

Belongs to the SMARCD family. As to quaternary structure, component of the RSC complex composed of at least arp9, arp42, rsc1, rsc4, rsc7, rsc9, rsc58, sfh1, snf21, ssr1, ssr2, ssr3 and ssr4. The complex interacts with histone and histone variant components of centromeric chromatin. Component of the SWI/SNF global transcription activator complex composed of at least arp9, arp42, snf5, snf22, snf30, sbf59, sol1, ssr1, ssr2, ssr3, ssr4 and tfg3.

It localises to the cytoplasm. Its subcellular location is the nucleus. In terms of biological role, component of the chromatin structure remodeling complex (RSC), which is involved in transcription regulation and nucleosome positioning. Controls particularly membrane and organelle development genes. Part of the SWI/SNF complex, an ATP-dependent chromatin remodeling complex, required for the positive and negative regulation of gene expression of a large number of genes. It changes chromatin structure by altering DNA-histone contacts within a nucleosome, leading eventually to a change in nucleosome position, thus facilitating or repressing binding of gene-specific transcription factors. In Schizosaccharomyces pombe (strain 972 / ATCC 24843) (Fission yeast), this protein is SWI/SNF and RSC complexes subunit ssr3 (ssr3).